The primary structure comprises 440 residues: 5-hydroxytryptamine receptor 6 (440 aa).

Topologically, residues 1 to 27 (MVPEPGPTANSTPAWGAGPPSAPGGSG) are extracellular. The chain crosses the membrane as a helical span at residues 28 to 52 (WVAAALCVVIALTAAANSLLIALIC). Topologically, residues 53 to 62 (TQPALRNTSN) are cytoplasmic. Residues 63-88 (FFLVSLFTSDLMVGLVVMPPAMLNAL) form a helical membrane-spanning segment. Residues 89-96 (YGRWVLAR) are Extracellular-facing. Residues 97–122 (GLCLLWTAFDVMCCSASILNLCLISL) traverse the membrane as a helical segment. A disulfide bridge links Cys99 with Cys180. Asp106 lines the serotonin pocket. Topologically, residues 123–142 (DRYLLILSPLRYKLRMTPLR) are cytoplasmic. Residues 143–167 (ALALVLGAWSLAALASFLPLLLGWH) traverse the membrane as a helical segment. Over 168–185 (ELGHARPPVPGQCRLLAS) the chain is Extracellular. The chain crosses the membrane as a helical span at residues 186 to 209 (LPFVLVASGLTFFLPSGAICFTYC). The Cytoplasmic portion of the chain corresponds to 210-266 (RILLAARKQAVQVASLTTGMASQASETLQVPRTPRPGVESADSRRLATKHSRKALKA). The chain crosses the membrane as a helical span at residues 267-293 (SLTLGILLGMFFVTWLPFFVANIVQAV). A serotonin-binding site is contributed by Asn288. The Extracellular portion of the chain corresponds to 294 to 299 (CDCISP). The chain crosses the membrane as a helical span at residues 300–323 (GLFDVLTWLGYCNSTMNPIIYPLF). Topologically, residues 324–440 (MRDFKRALGR…RPHPLGIPTN (117 aa)) are cytoplasmic. The disordered stretch occupies residues 346-392 (ASLASPSLRTSHSGPRPGLSLQQVLPLPLPPDSDSDSDAGSGGSSGL). Residues 347-358 (SLASPSLRTSHS) are compositionally biased toward polar residues. A compositionally biased stretch (low complexity) spans 362–371 (PGLSLQQVLP).

The protein belongs to the G-protein coupled receptor 1 family. In terms of assembly, interacts with MTOR, RPTOR and NF1. Interacts with CDK5. In terms of tissue distribution, expressed in several human brain regions, most prominently in the caudate nucleus.

It localises to the cell membrane. G-protein coupled receptor for 5-hydroxytryptamine (serotonin), a biogenic hormone that functions as a neurotransmitter, a hormone and a mitogen. Also has a high affinity for tricyclic psychotropic drugs. Ligand binding causes a conformation change that triggers signaling via guanine nucleotide-binding proteins (G proteins) and modulates the activity of downstream effectors. HTR6 is coupled to G(s) G alpha proteins and mediates activation of adenylate cyclase activity. Controls pyramidal neurons migration during corticogenesis, through the regulation of CDK5 activity. Is an activator of mTOR signaling. This Homo sapiens (Human) protein is 5-hydroxytryptamine receptor 6.